The sequence spans 180 residues: Large ribosomal subunit protein uL18m (180 aa).

The protein belongs to the universal ribosomal protein uL18 family. As to quaternary structure, component of the mitochondrial ribosome large subunit (39S) which comprises a 16S rRNA and about 50 distinct proteins.

It localises to the mitochondrion. Together with thiosulfate sulfurtransferase (TST), acts as a mitochondrial import factor for the cytosolic 5S rRNA. The precursor form shows RNA chaperone activity; is able to fold the 5S rRNA into an import-competent conformation that is recognized by rhodanese (TST). Both the cytoplasmic and mitochondrial forms are able to bind to the helix IV-loop D in the gamma domain of the 5S rRNA. This chain is Large ribosomal subunit protein uL18m (Mrpl18), found in Mus musculus (Mouse).